A 255-amino-acid polypeptide reads, in one-letter code: Ditrans,polycis-undecaprenyl-diphosphate synthase ((2E,6E)-farnesyl-diphosphate specific) (255 aa).

D21 is a catalytic residue. D21 contributes to the Mg(2+) binding site. Substrate is bound by residues 22–25, W26, R34, H38, and 66–68; these read GNGR and SSE. N69 (proton acceptor) is an active-site residue. Substrate is bound by residues W70, R72, R189, and 195 to 197; that span reads RIS. Position 208 (E208) interacts with Mg(2+).

This sequence belongs to the UPP synthase family. As to quaternary structure, homodimer. Requires Mg(2+) as cofactor.

The enzyme catalyses 8 isopentenyl diphosphate + (2E,6E)-farnesyl diphosphate = di-trans,octa-cis-undecaprenyl diphosphate + 8 diphosphate. Catalyzes the sequential condensation of isopentenyl diphosphate (IPP) with (2E,6E)-farnesyl diphosphate (E,E-FPP) to yield (2Z,6Z,10Z,14Z,18Z,22Z,26Z,30Z,34E,38E)-undecaprenyl diphosphate (di-trans,octa-cis-UPP). UPP is the precursor of glycosyl carrier lipid in the biosynthesis of bacterial cell wall polysaccharide components such as peptidoglycan and lipopolysaccharide. The polypeptide is Ditrans,polycis-undecaprenyl-diphosphate synthase ((2E,6E)-farnesyl-diphosphate specific) (Xylella fastidiosa (strain Temecula1 / ATCC 700964)).